Reading from the N-terminus, the 60-residue chain is Mastoparan-VB1 (60 aa).

The N-terminal stretch at 1-23 is a signal peptide; the sequence is MKNTILLLFTAFIFLSGFFGMSA. A propeptide spanning residues 24–45 is cleaved from the precursor; that stretch reads EALADPKADPLAGPFPDADPDP. AXPX repeat units lie at residues 27–30, 31–34, 35–38, and 40–43; these read ADPK, ADPL, AGPF, and DADP. L59 bears the Leucine amide mark.

As to expression, expressed by the venom gland.

Its subcellular location is the secreted. The protein localises to the target cell membrane. Functionally, antimicrobial peptide. Shows activity against both Gram-positive (S.aureus MIC=1.9-3.75 ug/ml) and -negative (E.coli MIC=15-60 ug/ml) bacteria, as well against fungi (C.albicans MIC=15 ug/ml). Also promotes moderate mast cell degranulation. Does not show hemolytic activity on rabbit and human erythrocytes. Its mast cell degranulation activity may be related to the activation of G-protein coupled receptors in mast cells as well as interaction with other proteins located in cell endosomal membranes in the mast cells. The protein is Mastoparan-VB1 of Vespa bicolor (Black shield wasp).